The sequence spans 181 residues: Ribosome-recycling factor (181 aa).

The protein belongs to the RRF family.

The protein resides in the cytoplasm. Functionally, responsible for the release of ribosomes from messenger RNA at the termination of protein biosynthesis. May increase the efficiency of translation by recycling ribosomes from one round of translation to another. In Tropheryma whipplei (strain TW08/27) (Whipple's bacillus), this protein is Ribosome-recycling factor.